The primary structure comprises 333 residues: MATIKDVAKMAGVSTTTVSHVINKTRFVAKETEQQVLQAIKNLNYSPSAVARSLKVNTTKSIGMIVTTCETPYFAEIIHSVEELCYRQGYSLFLCNTQNNPEKIKNHLDMLAKKRVDGLLVMCAEYTQNSLNLLATFEDLPMVVMDWGPFNENTDLIQDNSFSGGYIATKYLIDNGHKDIAIISGELKKTTAVMRYQGFEKAMQEANLAINPDWIMEGFFEPEDGYECMNKILVQDKLPTAVFCCNDVMALGAISAIGEKGLKVPDDISVIGYDNIHASRFFSPPLTTIHQSKSRLGVQAINLLFKRISEKGKEHEIIEIYPELVIRKSVKTL.

An HTH lacI-type domain is found at 2-56; the sequence is ATIKDVAKMAGVSTTTVSHVINKTRFVAKETEQQVLQAIKNLNYSPSAVARSLKV. A DNA-binding region (H-T-H motif) is located at residues 4 to 23; it reads IKDVAKMAGVSTTTVSHVIN. Residues 48 to 56 mediate DNA binding; sequence SAVARSLKV. Residues Tyr73, Lys189, Thr191, Phe220, and Asp274 each coordinate hypoxanthine.

Homodimer.

It participates in purine metabolism; purine nucleotide biosynthesis [regulation]. Functionally, is the main repressor of the genes involved in the de novo synthesis of purine nucleotides, regulating purB, purC, purEK, purF, purHD, purL, purMN and guaBA expression. PurR is allosterically activated to bind its cognate DNA by binding the purine corepressors, hypoxanthine or guanine, thereby effecting transcription repression. This Histophilus somni (strain 129Pt) (Haemophilus somnus) protein is HTH-type transcriptional repressor PurR.